Reading from the N-terminus, the 170-residue chain is Myosin regulatory light chain 2 (170 aa).

Over residues 1–13 the composition is skewed to basic residues; the sequence is MSKAAKKKSSKKR. The disordered stretch occupies residues 1–22; sequence MSKAAKKKSSKKRSGSEAAQFD. 2 consecutive EF-hand domains span residues 24-59 and 93-128; these read KTIQEFKEAFGIMDQNKDGIIDKSDLKDLYASMGQI and DPEATIVGAFAMFDKKDCGKIKEDDLIKILQNKRGE. Ca(2+) contacts are provided by aspartate 37, asparagine 39, aspartate 41, and aspartate 48.

In terms of assembly, myosin is a hexamer of 2 heavy chains and 4 light chains (two regulatory light chains and two essential light chains).

In Caenorhabditis elegans, this protein is Myosin regulatory light chain 2 (mlc-2).